An 85-amino-acid polypeptide reads, in one-letter code: Putative membrane protein insertion efficiency factor (85 aa).

The protein belongs to the UPF0161 family.

It localises to the cell inner membrane. Functionally, could be involved in insertion of integral membrane proteins into the membrane. In Phenylobacterium zucineum (strain HLK1), this protein is Putative membrane protein insertion efficiency factor.